The primary structure comprises 974 residues: UvrABC system protein A (974 aa).

ATP is bound at residue 34-41; sequence GLSGSGKS. 2 ABC transporter domains span residues 331–610 and 630–959; these read WARS…TNSL and ISKT…QFLK. 663-670 serves as a coordination point for ATP; it reads GVSGGGKS. Residues 762-788 form a C4-type zinc finger; the sequence is CEACQGDGVIKIEMHFLPDVYVTCDVC.

It belongs to the ABC transporter superfamily. UvrA family. In terms of assembly, forms a heterotetramer with UvrB during the search for lesions.

It is found in the cytoplasm. Its function is as follows. The UvrABC repair system catalyzes the recognition and processing of DNA lesions. UvrA is an ATPase and a DNA-binding protein. A damage recognition complex composed of 2 UvrA and 2 UvrB subunits scans DNA for abnormalities. When the presence of a lesion has been verified by UvrB, the UvrA molecules dissociate. The sequence is that of UvrABC system protein A from Brucella melitensis biotype 1 (strain ATCC 23456 / CCUG 17765 / NCTC 10094 / 16M).